The primary structure comprises 695 residues: MSEFQLVSPYQPTGDQPKAIAGLVKSISEGHRFQTLLGATGTGKTFTIAHTIQQVGRPTLVMAHNKTLAAQLCNELRELFPHNAVEYFISYYDYYQPEAYVPSTDTYIAKSSSINDEIDMLRHSATRSLFERRDVIVVASVSCIYGLGMPEEYLKASIPFKVGQEINQRDVLRDLASIQYERNDLELVRGRFRLKGDVLEIVPAYEDRVIRIEFFGDEIEAIRLIDPVTGEILNSLSALRVYPARHFVTPEAQLERAILNIEQELEEQLALFRKEGKLLEAQRLEQRTRYDLEMLREVGYCNGIENYSRHLTGRKAGEPPACLVDYFKADDWLLVVDESHVTVPQIRGMYNGDRARKQVLVDHGFRLPSALDNRPLKAEEFWAKVHQCIFVSATPGNWELEQSEAQFETRVEDGKTLKFYVQGSGRVIEQVIRPTGVVDPEVHVRPTAGQVDDLLGEIYLRLERSQLGPAERVIVTTLTKRMAEDLTEYLQERGIRVRYLHSEITSIERIEILQDFREGAFDVLVGVNLLREGLDLPEVSLVAILDADKEGFLRAERSLIQMIGRAARNVRGMVVMYADTMTSSMARAIAETQRRREIQLQYNRQHNITPKPIVKKNSNAILSFLAISRKLNDPDLEKAFQAAQEIPLSEIPELIGQLELKMKEAAKNLEFEEAAQLRDRIKKLRQRLLGHPQGI.

The region spanning 25 to 176 is the Helicase ATP-binding domain; that stretch reads KSISEGHRFQ…NQRDVLRDLA (152 aa). An ATP-binding site is contributed by 38–45; sequence GATGTGKT. Positions 91–114 match the Beta-hairpin motif; sequence YYDYYQPEAYVPSTDTYIAKSSSI. The 164-residue stretch at 454–617 folds into the Helicase C-terminal domain; sequence LLGEIYLRLE…ITPKPIVKKN (164 aa). Residues 652–687 form the UVR domain; it reads PELIGQLELKMKEAAKNLEFEEAAQLRDRIKKLRQR.

The protein belongs to the UvrB family. Forms a heterotetramer with UvrA during the search for lesions. Interacts with UvrC in an incision complex.

The protein localises to the cytoplasm. The UvrABC repair system catalyzes the recognition and processing of DNA lesions. A damage recognition complex composed of 2 UvrA and 2 UvrB subunits scans DNA for abnormalities. Upon binding of the UvrA(2)B(2) complex to a putative damaged site, the DNA wraps around one UvrB monomer. DNA wrap is dependent on ATP binding by UvrB and probably causes local melting of the DNA helix, facilitating insertion of UvrB beta-hairpin between the DNA strands. Then UvrB probes one DNA strand for the presence of a lesion. If a lesion is found the UvrA subunits dissociate and the UvrB-DNA preincision complex is formed. This complex is subsequently bound by UvrC and the second UvrB is released. If no lesion is found, the DNA wraps around the other UvrB subunit that will check the other stand for damage. The sequence is that of UvrABC system protein B from Synechococcus sp. (strain JA-2-3B'a(2-13)) (Cyanobacteria bacterium Yellowstone B-Prime).